The chain runs to 271 residues: Tryptophan synthase alpha chain (271 aa).

Catalysis depends on proton acceptor residues glutamate 47 and aspartate 58.

It belongs to the TrpA family. Tetramer of two alpha and two beta chains.

It catalyses the reaction (1S,2R)-1-C-(indol-3-yl)glycerol 3-phosphate + L-serine = D-glyceraldehyde 3-phosphate + L-tryptophan + H2O. The protein operates within amino-acid biosynthesis; L-tryptophan biosynthesis; L-tryptophan from chorismate: step 5/5. Functionally, the alpha subunit is responsible for the aldol cleavage of indoleglycerol phosphate to indole and glyceraldehyde 3-phosphate. In Thermus thermophilus (strain ATCC BAA-163 / DSM 7039 / HB27), this protein is Tryptophan synthase alpha chain.